We begin with the raw amino-acid sequence, 251 residues long: Tyrosine transport ATP-binding protein (251 aa).

One can recognise an ABC transporter domain in the interval 2–248; that stretch reads LQIKNLSKSF…TVEEILEKFE (247 aa). 39 to 46 is an ATP binding site; that stretch reads GSNGTGKS.

This sequence belongs to the ABC transporter superfamily. The complex is probably composed of two ATP-binding proteins (CDR20291_0806), two transmembrane proteins (CDR20291_0807) and a solute-binding protein (CDR20291_0805).

The protein localises to the cell membrane. The catalysed reaction is L-tyrosine(out) + ATP + H2O = L-tyrosine(in) + ADP + phosphate + H(+). Its function is as follows. Probably part of an ABC transporter complex involved in tyrosine uptake. May also import phenylalanine. Probably responsible for energy coupling to the transport system. This is Tyrosine transport ATP-binding protein from Clostridioides difficile (strain R20291) (Peptoclostridium difficile).